The primary structure comprises 213 residues: Large ribosomal subunit protein uL3 (213 aa).

The tract at residues 131 to 155 (GRASHGNSVSHRAHGSTGNNQDPGR) is disordered. Polar residues predominate over residues 135–152 (HGNSVSHRAHGSTGNNQD). An N5-methylglutamine modification is found at Gln151.

The protein belongs to the universal ribosomal protein uL3 family. Part of the 50S ribosomal subunit. Forms a cluster with proteins L14 and L19. Methylated by PrmB.

In terms of biological role, one of the primary rRNA binding proteins, it binds directly near the 3'-end of the 23S rRNA, where it nucleates assembly of the 50S subunit. The sequence is that of Large ribosomal subunit protein uL3 from Agrobacterium fabrum (strain C58 / ATCC 33970) (Agrobacterium tumefaciens (strain C58)).